The following is a 201-amino-acid chain: Envelope glycoprotein (201 aa).

Topologically, residues 1 to 148 (RRARYKKEPV…FNKSPWFTTL (148 aa)) are extracellular. Residues 10–30 (VSLTLALLLGGLTMGGIAAGV) are fusion peptide. The stretch at 39-75 (ATQQFQQLQAAIHDDLKEVEKSITNLEKSLTSLSEVV) forms a coiled coil. An immunosuppression region spans residues 76–92 (LQNRRGLDLLFLKEGGL). The CX6CC motif lies at 93-101 (CAALKEECC). A helical transmembrane segment spans residues 149 to 169 (ISTVMGPLIILLLILLFGPCI). Residue Cys-168 is the site of S-palmitoyl cysteine; by host attachment. The Cytoplasmic portion of the chain corresponds to 170–201 (LNRLVQFIKDRISVVQALVLTQQYHQLKTIGD). The YXXL motif; contains endocytosis signal signature appears at 193 to 196 (YHQL).

The mature envelope protein (Env) consists of a trimer of SU-TM heterodimers attached by a labile interchain disulfide bond. Specific enzymatic cleavages in vivo yield mature proteins. Envelope glycoproteins are synthesized as an inactive precursor that is N-glycosylated and processed likely by host cell furin or by a furin-like protease in the Golgi to yield the mature SU and TM proteins. The cleavage site between SU and TM requires the minimal sequence [KR]-X-[KR]-R. The R-peptide is released from the C-terminus of the cytoplasmic tail of the TM protein upon particle formation as a result of proteolytic cleavage by the viral protease. Cleavage of this peptide is required for TM to become fusogenic. In terms of processing, the transmembrane protein is palmitoylated. Post-translationally, the R-peptide is palmitoylated.

The protein localises to the virion membrane. It localises to the host cell membrane. The surface protein (SU) attaches the virus to the host cell by binding to its receptor. This interaction triggers the refolding of the transmembrane protein (TM) and is thought to activate its fusogenic potential by unmasking its fusion peptide. Fusion occurs at the host cell plasma membrane. In terms of biological role, the transmembrane protein (TM) acts as a class I viral fusion protein. Under the current model, the protein has at least 3 conformational states: pre-fusion native state, pre-hairpin intermediate state, and post-fusion hairpin state. During viral and target cell membrane fusion, the coiled coil regions (heptad repeats) assume a trimer-of-hairpins structure, positioning the fusion peptide in close proximity to the C-terminal region of the ectodomain. The formation of this structure appears to drive apposition and subsequent fusion of viral and target cell membranes. Membranes fusion leads to delivery of the nucleocapsid into the cytoplasm. This is Envelope glycoprotein (env) from Mus musculus (Mouse).